The primary structure comprises 634 residues: Dachshund homolog 2 (634 aa).

A DACHbox-N region spans residues 76–162; sequence RMVDMHGVKV…LITRKDFETL (87 aa). Disordered regions lie at residues 171 to 194, 244 to 286, and 378 to 416; these read RKRQ…KRSL, LQGN…SGPQ, and IPES…MDHH. The segment covering 244–269 has biased composition (polar residues); it reads LQGNGSQNGTESEPDDLNSTTGGSES. The segment covering 396-412 has biased composition (low complexity); sequence SQTSSHPSSSVSSSPSQ. The tract at residues 488–568 is DACHbox-C; the sequence is SSVETLLTNI…KAKRKLQEAL (81 aa). The stretch at 494-588 forms a coiled coil; that stretch reads LTNIQGLLKV…EQALKQATSG (95 aa).

Belongs to the DACH/dachshund family. Interacts with SIX6. Interacts with EYA2. As to expression, expressed in embryo, and at lower levels in the newborn.

It localises to the nucleus. Its function is as follows. Transcription factor that is involved in regulation of organogenesis. Seems to be a regulator for SIX1 and SIX6. Seems to act as a corepressor of SIX6 in regulating proliferation by directly repressing cyclin-dependent kinase inhibitors, including the p27Kip1 promoter. Is recruited with SIX6 to the p27Kip1 promoter in embryonal retina. SIX6 corepression also seems to involve NCOR1, TBL1, HDAC1 and HDAC3. May be involved together with PAX3, SIX1, and EYA2 in regulation of myogenesis. In the developing somite, expression of DACH2 and PAX3 is regulated by the overlying ectoderm, and DACH2 and PAX3 positively regulate each other's expression. Probably binds to DNA via its DACHbox-N domain. The sequence is that of Dachshund homolog 2 (Dach2) from Mus musculus (Mouse).